The chain runs to 106 residues: MTEFKRIPPEQAQALREQGAVLVDVRDPQAFESNHIPDSVHLDNHSIADFIREADLDKPLVVVCYHGNSSQSAAAYLVGQGFSDVYSVDGGFELWRTTYPQETVQG.

Positions 16 to 104 (REQGAVLVDV…WRTTYPQETV (89 aa)) constitute a Rhodanese domain. Cysteine 64 (cysteine persulfide intermediate) is an active-site residue.

This sequence belongs to the GlpE family.

The protein localises to the cytoplasm. The catalysed reaction is thiosulfate + hydrogen cyanide = thiocyanate + sulfite + 2 H(+). The enzyme catalyses thiosulfate + [thioredoxin]-dithiol = [thioredoxin]-disulfide + hydrogen sulfide + sulfite + 2 H(+). Transferase that catalyzes the transfer of sulfur from thiosulfate to thiophilic acceptors such as cyanide or dithiols. May function in a CysM-independent thiosulfate assimilation pathway by catalyzing the conversion of thiosulfate to sulfite, which can then be used for L-cysteine biosynthesis. The protein is Thiosulfate sulfurtransferase GlpE of Pseudomonas syringae pv. syringae (strain B728a).